Reading from the N-terminus, the 194-residue chain is Cathelicidin-related peptide isoform 3 (194 aa).

An N-terminal signal peptide occupies residues 1-22 (MQGFFWKTWLVLAVCGTPASLA). Residues 23–164 (HRPLSYGEAL…DQPKRVKRFK (142 aa)) constitute a propeptide that is removed on maturation. 2 disulfide bridges follow: Cys79-Cys90 and Cys101-Cys118. Residues 125–145 (EEEEEEEEEEQKAEAENDEEV) show a composition bias toward acidic residues. The disordered stretch occupies residues 125–156 (EEEEEEEEEEQKAEAENDEEVEKEKGDEEKDQ). A compositionally biased stretch (basic and acidic residues) spans 146-156 (EKEKGDEEKDQ).

Belongs to the cathelicidin family. In terms of tissue distribution, expressed by the venom gland.

The protein resides in the secreted. It localises to the target cell membrane. Potent antimicrobial peptide against Gram-negative and Gram-positive bacteria. Adopts an amphipathic alpha helical conformation, that may allow to partition into the target membrane. Low hemolytic activities have been observed on mammalian cells. The sequence is that of Cathelicidin-related peptide isoform 3 from Crotalus durissus cascavella (Northeastern Brazilian rattlesnake).